The following is a 549-amino-acid chain: Glucose-6-phosphate isomerase (549 aa).

Glu-355 serves as the catalytic Proton donor. Active-site residues include His-386 and Lys-514.

This sequence belongs to the GPI family.

The protein resides in the cytoplasm. The catalysed reaction is alpha-D-glucose 6-phosphate = beta-D-fructose 6-phosphate. Its pathway is carbohydrate biosynthesis; gluconeogenesis. It functions in the pathway carbohydrate degradation; glycolysis; D-glyceraldehyde 3-phosphate and glycerone phosphate from D-glucose: step 2/4. Functionally, catalyzes the reversible isomerization of glucose-6-phosphate to fructose-6-phosphate. This is Glucose-6-phosphate isomerase from Salmonella typhi.